The sequence spans 911 residues: Anoctamin-6 (911 aa).

Topologically, residues 1 to 301 (MQMMTRKVLL…YGEKIGIYFA (301 aa)) are cytoplasmic. Residues 302 to 322 (WLGYYTQMLLLAAVVGVACFL) form a helical membrane-spanning segment. At 323–376 (YGYLDQDNCTWSKEVCDPDIGGQILMCPQCDRLCPFWRLNITCESSKKLCIFDS) the chain is on the extracellular side. The N-linked (GlcNAc...) asparagine glycan is linked to Asn330. Intrachain disulfides connect Cys331/Cys372, Cys338/Cys365, Cys349/Cys807, Cys352/Cys356, and Cys596/Cys601. Residue Asn362 is glycosylated (N-linked (GlcNAc...) asparagine). The chain crosses the membrane as a helical span at residues 377 to 397 (FGTLIFAVFMGVWVTLFLEFW). Over 398–456 (KRRQAELEYEWDTVELQQEEQARPEYEAQCNHVVINEITQEEERIPFTTCGKCIRVTLC) the chain is Cytoplasmic. The helical transmembrane segment at 457 to 477 (ASAVFFWILLIIASVIGIIVY) threads the bilayer. Residues 478–510 (RLSVFIVFSTTLPKNPNGTDPIQKYLTPQMATS) lie on the Extracellular side of the membrane. Residue Asn494 is glycosylated (N-linked (GlcNAc...) asparagine). Residues 511-531 (ITASIISFIIIMILNTIYEKV) form a helical membrane-spanning segment. Residues 532–552 (AIMITNFELPRTQTDYENSLT) are Cytoplasmic-facing. Residues 553-573 (MKMFLFQFVNYYSSCFYIAFF) form a helical membrane-spanning segment. At 574–602 (KGKFVGYPGDPVYLLGKYRSEECDPGGCL) the chain is on the extracellular side. Residues 603–622 (LELTTQLTIIMGGKAIWNNI) traverse the membrane as a helical segment. At 623 to 664 (QEVLLPWVMNLIGRYKRVSGSEKITPRWEQDYHLQPMGKLGL) the chain is on the cytoplasmic side. Residues Glu624, Glu667, and Glu670 each contribute to the Ca(2+) site. The next 2 helical transmembrane spans lie at 665-685 (FYEYLEMIIQFGFVTLFVASF) and 686-706 (PLAPLLALVNNILEIRVDAWK). Residues 707–723 (LTTQFRRMVPEKAQDIG) lie on the Cytoplasmic side of the membrane. A helical membrane pass occupies residues 724–744 (AWQPIMQGIAILAVVTNAMII). Residues 745–837 (AFTSDMIPRL…YWHVIAAKLA (93 aa)) lie on the Extracellular side of the membrane. N-linked (GlcNAc...) asparagine glycans are attached at residues Asn778, Asn785, and Asn803. Residues 838 to 858 (FIIVMEHIIYSVKFFISYAIP) traverse the membrane as a helical segment. At 859–911 (DVSKITKSKIKREKYLTQKLLHESHLKDLTKNMGIIAERIGGTVDNSVRPKLE) the chain is on the cytoplasmic side.

This sequence belongs to the anoctamin family. Homodimer. As to expression, predominant expression seen in epithelial tissues. Also found in skeletal system where it is primarily expressed in osteoblasts.

The protein localises to the cell membrane. The enzyme catalyses a 1,2-diacyl-sn-glycero-3-phospho-L-serine(in) = a 1,2-diacyl-sn-glycero-3-phospho-L-serine(out). It catalyses the reaction a beta-D-galactosyl-(1&lt;-&gt;1')-N-acylsphing-4-enine(out) = a beta-D-galactosyl-(1&lt;-&gt;1')-N-acylsphing-4-enine(in). The catalysed reaction is a 1,2-diacyl-sn-glycero-3-phosphocholine(in) = a 1,2-diacyl-sn-glycero-3-phosphocholine(out). With respect to regulation, exhibits synergistic gating by Ca(2+) and voltage. Inhibited by some non-specific cation channel blockers such as: ruthenium red, 2-aminoethyl diphenylborinate (2APB), gadolinium and cadmium ions. In terms of biological role, small-conductance calcium-activated nonselective cation (SCAN) channel which acts as a regulator of phospholipid scrambling in platelets, osteoblasts and fetal thymocytes. Phospholipid scrambling results in surface exposure of phosphatidylserine which in platelets is essential to trigger the clotting system whereas in osteoblasts is essential for the deposition of hydroxyapatite during bone mineralization. Has calcium-dependent phospholipid scramblase activity; scrambles phosphatidylserine, phosphatidylcholine and galactosylceramide. Can generate outwardly rectifying chloride channel currents in airway epithelial cells and Jurkat T lymphocytes. This chain is Anoctamin-6 (Ano6), found in Mus musculus (Mouse).